A 177-amino-acid chain; its full sequence is Endoribonuclease YbeY (177 aa).

Residues H118, H122, and H128 each coordinate Zn(2+).

Belongs to the endoribonuclease YbeY family. Zn(2+) is required as a cofactor.

It localises to the cytoplasm. Single strand-specific metallo-endoribonuclease involved in late-stage 70S ribosome quality control and in maturation of the 3' terminus of the 16S rRNA. The polypeptide is Endoribonuclease YbeY (Mycobacterium sp. (strain JLS)).